Reading from the N-terminus, the 90-residue chain is RNA-binding protein Hfq (90 aa).

Positions 9–68 (DPFLNALRRERVPVSIYLVNGIKLQGQVESFDQFVILLKNTVSQMVYKHAISTVVPARPF) constitute a Sm domain. The disordered stretch occupies residues 71 to 90 (TGHQNAQGGYGPQDDVPSGE).

The protein belongs to the Hfq family. In terms of assembly, homohexamer.

Functionally, RNA chaperone that binds small regulatory RNA (sRNAs) and mRNAs to facilitate mRNA translational regulation in response to envelope stress, environmental stress and changes in metabolite concentrations. Also binds with high specificity to tRNAs. This is RNA-binding protein Hfq from Shewanella putrefaciens (strain CN-32 / ATCC BAA-453).